The primary structure comprises 595 residues: Sulfite reductase [NADPH] flavoprotein alpha-component (595 aa).

Residues 59-197 (ITVLSASQTG…KADIWRREIV (139 aa)) form the Flavodoxin-like domain. FMN-binding positions include 65 to 70 (SQTGNA), 112 to 115 (STQG), and 148 to 157 (LGDSSYTYFA). The 215-residue stretch at 230 to 444 (EEPFTAHLVV…IEHNDNFRLP (215 aa)) folds into the FAD-binding FR-type domain. FAD contacts are provided by residues T318, F352, 382-385 (RLYS), 400-402 (TVS), Y406, and 415-418 (GGAS). NADP(+) contacts are provided by residues 515-516 (SQ), 521-525 (KIYVQ), and D557. FAD is bound at residue Y595.

This sequence belongs to the NADPH-dependent sulphite reductase flavoprotein subunit CysJ family. In the N-terminal section; belongs to the flavodoxin family. It in the C-terminal section; belongs to the flavoprotein pyridine nucleotide cytochrome reductase family. Alpha(8)-beta(8). The alpha component is a flavoprotein, the beta component is a hemoprotein. FAD serves as cofactor. It depends on FMN as a cofactor.

It catalyses the reaction hydrogen sulfide + 3 NADP(+) + 3 H2O = sulfite + 3 NADPH + 4 H(+). The protein operates within sulfur metabolism; hydrogen sulfide biosynthesis; hydrogen sulfide from sulfite (NADPH route): step 1/1. Its function is as follows. Component of the sulfite reductase complex that catalyzes the 6-electron reduction of sulfite to sulfide. This is one of several activities required for the biosynthesis of L-cysteine from sulfate. The flavoprotein component catalyzes the electron flow from NADPH -&gt; FAD -&gt; FMN to the hemoprotein component. This is Sulfite reductase [NADPH] flavoprotein alpha-component from Baumannia cicadellinicola subsp. Homalodisca coagulata.